A 397-amino-acid chain; its full sequence is Argininosuccinate synthase (397 aa).

9–17 (AYSGGLDTS) provides a ligand contact to ATP. Y87 lines the L-citrulline pocket. G117 contributes to the ATP binding site. L-aspartate is bound by residues T119, N123, and D124. Position 123 (N123) interacts with L-citrulline. L-citrulline-binding residues include R127, S175, S184, E257, and Y269.

It belongs to the argininosuccinate synthase family. Type 1 subfamily. In terms of assembly, homotetramer.

The protein resides in the cytoplasm. The enzyme catalyses L-citrulline + L-aspartate + ATP = 2-(N(omega)-L-arginino)succinate + AMP + diphosphate + H(+). Its pathway is amino-acid biosynthesis; L-arginine biosynthesis; L-arginine from L-ornithine and carbamoyl phosphate: step 2/3. In Dictyoglomus thermophilum (strain ATCC 35947 / DSM 3960 / H-6-12), this protein is Argininosuccinate synthase.